Consider the following 106-residue polypeptide: Aspartyl/glutamyl-tRNA(Asn/Gln) amidotransferase subunit C (106 aa).

Belongs to the GatC family. As to quaternary structure, heterotrimer of A, B and C subunits.

It catalyses the reaction L-glutamyl-tRNA(Gln) + L-glutamine + ATP + H2O = L-glutaminyl-tRNA(Gln) + L-glutamate + ADP + phosphate + H(+). The catalysed reaction is L-aspartyl-tRNA(Asn) + L-glutamine + ATP + H2O = L-asparaginyl-tRNA(Asn) + L-glutamate + ADP + phosphate + 2 H(+). Allows the formation of correctly charged Asn-tRNA(Asn) or Gln-tRNA(Gln) through the transamidation of misacylated Asp-tRNA(Asn) or Glu-tRNA(Gln) in organisms which lack either or both of asparaginyl-tRNA or glutaminyl-tRNA synthetases. The reaction takes place in the presence of glutamine and ATP through an activated phospho-Asp-tRNA(Asn) or phospho-Glu-tRNA(Gln). The protein is Aspartyl/glutamyl-tRNA(Asn/Gln) amidotransferase subunit C of Lactiplantibacillus plantarum (strain ATCC BAA-793 / NCIMB 8826 / WCFS1) (Lactobacillus plantarum).